Consider the following 126-residue polypeptide: Glycine cleavage system H protein (126 aa).

In terms of domain architecture, Lipoyl-binding spans 22–103 (KAYIGITDYA…PYGSWMALVE (82 aa)). The residue at position 63 (K63) is an N6-lipoyllysine.

This sequence belongs to the GcvH family. As to quaternary structure, the glycine cleavage system is composed of four proteins: P, T, L and H. (R)-lipoate is required as a cofactor.

The glycine cleavage system catalyzes the degradation of glycine. The H protein shuttles the methylamine group of glycine from the P protein to the T protein. This chain is Glycine cleavage system H protein, found in Thermoanaerobacter sp. (strain X514).